The sequence spans 360 residues: D-alanine--D-alanine ligase (360 aa).

An ATP-grasp domain is found at 146–352; that stretch reads KLCVADAGIA…YRNLITRLLE (207 aa). 179 to 234 lines the ATP pocket; that stretch reads EAQVSYPLFVKPASLGSSIGISKVHNREELHPALQAACALDWKVVVESTVKGREIE. Residues Asp305, Glu319, and Asn321 each contribute to the Mg(2+) site.

It belongs to the D-alanine--D-alanine ligase family. Mg(2+) serves as cofactor. It depends on Mn(2+) as a cofactor.

The protein resides in the cytoplasm. The catalysed reaction is 2 D-alanine + ATP = D-alanyl-D-alanine + ADP + phosphate + H(+). It functions in the pathway cell wall biogenesis; peptidoglycan biosynthesis. Cell wall formation. This is D-alanine--D-alanine ligase from Chlorobium chlorochromatii (strain CaD3).